The following is a 245-amino-acid chain: Ribosomal RNA large subunit methyltransferase E (245 aa).

Positions 1-25 (MTKSPIGGNRSGRKLGQKVKKGKLK) are disordered. Residues 11–25 (SGRKLGQKVKKGKLK) are compositionally biased toward basic residues. G81, W83, D104, D120, and D144 together coordinate S-adenosyl-L-methionine. K184 (proton acceptor) is an active-site residue.

The protein belongs to the class I-like SAM-binding methyltransferase superfamily. RNA methyltransferase RlmE family.

It localises to the cytoplasm. The enzyme catalyses uridine(2552) in 23S rRNA + S-adenosyl-L-methionine = 2'-O-methyluridine(2552) in 23S rRNA + S-adenosyl-L-homocysteine + H(+). Functionally, specifically methylates the uridine in position 2552 of 23S rRNA at the 2'-O position of the ribose in the fully assembled 50S ribosomal subunit. This Rhizobium meliloti (strain 1021) (Ensifer meliloti) protein is Ribosomal RNA large subunit methyltransferase E.